The sequence spans 157 residues: MKCLLIATGQHVPTWVAQGFAEYHRRLSYWLPLELVEIEPSMRGKNHDPQRAIEDEGRRVMAALPKQPYAVTLDVKGKPLNSEQLAQRMEHWRGLGRNLVFLIGGPEGHSQEVLNISNERWSLGPLTLPHMLVRLIVVEQLYRAATILTNHPYHRGK.

S-adenosyl-L-methionine-binding positions include Leu73, Gly104, and 123 to 128; that span reads LGPLTL.

The protein belongs to the RNA methyltransferase RlmH family. As to quaternary structure, homodimer.

It localises to the cytoplasm. The enzyme catalyses pseudouridine(1915) in 23S rRNA + S-adenosyl-L-methionine = N(3)-methylpseudouridine(1915) in 23S rRNA + S-adenosyl-L-homocysteine + H(+). Specifically methylates the pseudouridine at position 1915 (m3Psi1915) in 23S rRNA. The protein is Ribosomal RNA large subunit methyltransferase H of Xylella fastidiosa (strain M23).